Here is a 454-residue protein sequence, read N- to C-terminus: Tryptophanase (454 aa).

Position 256 is an N6-(pyridoxal phosphate)lysine (Lys-256).

Belongs to the beta-eliminating lyase family. Homotetramer. Requires pyridoxal 5'-phosphate as cofactor.

The enzyme catalyses L-tryptophan + H2O = indole + pyruvate + NH4(+). The protein operates within amino-acid degradation; L-tryptophan degradation via pyruvate pathway; indole and pyruvate from L-tryptophan: step 1/1. In Rhodobacter capsulatus (Rhodopseudomonas capsulata), this protein is Tryptophanase (tnaA).